The sequence spans 187 residues: MISSNDFRTGTTIELDGAVWRVIEFLHVKPGKGSAFVRTKLKAVVSGNVVEKTFRAGEMVPQALLEKSKLQHTYMDGDDFVFMDMTSYEETRLTAKQIGESRKYLKEGMEVNVVSWNEKPLEVELPNSVVLEIKETDPGVKGDTASGGTKPAILETGAQVMVPLFISIGEKIRVDTRNDSYLGRETQ.

Belongs to the elongation factor P family.

The protein localises to the cytoplasm. The protein operates within protein biosynthesis; polypeptide chain elongation. Its function is as follows. Involved in peptide bond synthesis. Stimulates efficient translation and peptide-bond synthesis on native or reconstituted 70S ribosomes in vitro. Probably functions indirectly by altering the affinity of the ribosome for aminoacyl-tRNA, thus increasing their reactivity as acceptors for peptidyl transferase. In Prochlorococcus marinus (strain NATL2A), this protein is Elongation factor P.